We begin with the raw amino-acid sequence, 450 residues long: Glucose-6-phosphate isomerase (450 aa).

At threonine 39 the chain carries Phosphothreonine. Glutamate 291 acts as the Proton donor in catalysis. Active-site residues include histidine 312 and lysine 426.

This sequence belongs to the GPI family.

The protein localises to the cytoplasm. It catalyses the reaction alpha-D-glucose 6-phosphate = beta-D-fructose 6-phosphate. The protein operates within carbohydrate biosynthesis; gluconeogenesis. Its pathway is carbohydrate degradation; glycolysis; D-glyceraldehyde 3-phosphate and glycerone phosphate from D-glucose: step 2/4. In terms of biological role, catalyzes the reversible isomerization of glucose-6-phosphate to fructose-6-phosphate. The protein is Glucose-6-phosphate isomerase of Bacillus mycoides (strain KBAB4) (Bacillus weihenstephanensis).